We begin with the raw amino-acid sequence, 262 residues long: Cell division protein FtsQ (262 aa).

Over 1–20 (MSWSDKRRHWRARKSQVNWY) the chain is Cytoplasmic. A helical membrane pass occupies residues 21 to 41 (LWSGIGFLSLVIGSFVFGGYL). At 42–262 (LHKFLNDAST…EPIINDEKPR (221 aa)) the chain is on the periplasmic side. A POTRA domain is found at 52 to 121 (LPIEAVAIKG…AKLRVYLQEQ (70 aa)).

The protein belongs to the FtsQ/DivIB family. FtsQ subfamily. In terms of assembly, part of a complex composed of FtsB, FtsL and FtsQ.

It localises to the cell inner membrane. In terms of biological role, essential cell division protein. May link together the upstream cell division proteins, which are predominantly cytoplasmic, with the downstream cell division proteins, which are predominantly periplasmic. May control correct divisome assembly. The chain is Cell division protein FtsQ from Shewanella oneidensis (strain ATCC 700550 / JCM 31522 / CIP 106686 / LMG 19005 / NCIMB 14063 / MR-1).